A 101-amino-acid polypeptide reads, in one-letter code: Small ribosomal subunit protein uS14 (101 aa).

This sequence belongs to the universal ribosomal protein uS14 family. As to quaternary structure, part of the 30S ribosomal subunit. Contacts proteins S3 and S10.

Its function is as follows. Binds 16S rRNA, required for the assembly of 30S particles and may also be responsible for determining the conformation of the 16S rRNA at the A site. This chain is Small ribosomal subunit protein uS14, found in Neisseria meningitidis serogroup C / serotype 2a (strain ATCC 700532 / DSM 15464 / FAM18).